The chain runs to 139 residues: Putative truncated protein trichome birefringence-like 46 (139 aa).

Belongs to the PC-esterase family. TBL subfamily.

This chain is Putative truncated protein trichome birefringence-like 46 (TBL46), found in Arabidopsis thaliana (Mouse-ear cress).